Reading from the N-terminus, the 450-residue chain is tRNA-2-methylthio-N(6)-dimethylallyladenosine synthase (450 aa).

An MTTase N-terminal domain is found at 14-132; it reads GEFFIETWGC…FPNYLNEVKK (119 aa). [4Fe-4S] cluster contacts are provided by cysteine 23, cysteine 59, cysteine 93, cysteine 169, cysteine 173, and cysteine 176. The Radical SAM core domain occupies 155-385; sequence RKNSMKAFVT…VEVVNEISAK (231 aa). The TRAM domain maps to 388–450; sequence KAYEGKIEEV…NSFSLTGEEI (63 aa).

It belongs to the methylthiotransferase family. MiaB subfamily. As to quaternary structure, monomer. Requires [4Fe-4S] cluster as cofactor.

The protein localises to the cytoplasm. The catalysed reaction is N(6)-dimethylallyladenosine(37) in tRNA + (sulfur carrier)-SH + AH2 + 2 S-adenosyl-L-methionine = 2-methylsulfanyl-N(6)-dimethylallyladenosine(37) in tRNA + (sulfur carrier)-H + 5'-deoxyadenosine + L-methionine + A + S-adenosyl-L-homocysteine + 2 H(+). Its function is as follows. Catalyzes the methylthiolation of N6-(dimethylallyl)adenosine (i(6)A), leading to the formation of 2-methylthio-N6-(dimethylallyl)adenosine (ms(2)i(6)A) at position 37 in tRNAs that read codons beginning with uridine. In Clostridium botulinum (strain Langeland / NCTC 10281 / Type F), this protein is tRNA-2-methylthio-N(6)-dimethylallyladenosine synthase.